The chain runs to 217 residues: LexA repressor (217 aa).

Positions 28-48 (RAEIAAEFGFSSPNAAEEHLR) form a DNA-binding region, H-T-H motif. Catalysis depends on for autocatalytic cleavage activity residues serine 136 and lysine 173.

This sequence belongs to the peptidase S24 family. As to quaternary structure, homodimer.

The enzyme catalyses Hydrolysis of Ala-|-Gly bond in repressor LexA.. Represses a number of genes involved in the response to DNA damage (SOS response), including recA and lexA. In the presence of single-stranded DNA, RecA interacts with LexA causing an autocatalytic cleavage which disrupts the DNA-binding part of LexA, leading to derepression of the SOS regulon and eventually DNA repair. This chain is LexA repressor, found in Cupriavidus taiwanensis (strain DSM 17343 / BCRC 17206 / CCUG 44338 / CIP 107171 / LMG 19424 / R1) (Ralstonia taiwanensis (strain LMG 19424)).